Consider the following 750-residue polypeptide: Eukaryotic translation initiation factor 3 subunit B (750 aa).

Residues 42 to 128 form the RRM domain; sequence TFVVVDGLPE…HTLRVNKMTD (87 aa). WD repeat units follow at residues 195 to 234, 236 to 292, 309 to 348, and 519 to 562; these read DRQQ…RLRR, PHPF…PLRS, SAKF…LMDK, and LDKK…EKPE.

It belongs to the eIF-3 subunit B family. In terms of assembly, component of the eukaryotic translation initiation factor 3 (eIF-3) complex.

The protein localises to the cytoplasm. In terms of biological role, RNA-binding component of the eukaryotic translation initiation factor 3 (eIF-3) complex, which is involved in protein synthesis of a specialized repertoire of mRNAs and, together with other initiation factors, stimulates binding of mRNA and methionyl-tRNAi to the 40S ribosome. The eIF-3 complex specifically targets and initiates translation of a subset of mRNAs involved in cell proliferation. This chain is Eukaryotic translation initiation factor 3 subunit B, found in Chaetomium globosum (strain ATCC 6205 / CBS 148.51 / DSM 1962 / NBRC 6347 / NRRL 1970) (Soil fungus).